A 333-amino-acid chain; its full sequence is Biotin synthase (333 aa).

Residues Tyr-40–Arg-269 enclose the Radical SAM core domain. Residues Cys-55, Cys-59, and Cys-62 each contribute to the [4Fe-4S] cluster site. The [2Fe-2S] cluster site is built by Cys-100, Cys-132, Cys-192, and Arg-264.

It belongs to the radical SAM superfamily. Biotin synthase family. In terms of assembly, homodimer. [4Fe-4S] cluster is required as a cofactor. [2Fe-2S] cluster serves as cofactor.

It catalyses the reaction (4R,5S)-dethiobiotin + (sulfur carrier)-SH + 2 reduced [2Fe-2S]-[ferredoxin] + 2 S-adenosyl-L-methionine = (sulfur carrier)-H + biotin + 2 5'-deoxyadenosine + 2 L-methionine + 2 oxidized [2Fe-2S]-[ferredoxin]. It functions in the pathway cofactor biosynthesis; biotin biosynthesis; biotin from 7,8-diaminononanoate: step 2/2. Functionally, catalyzes the conversion of dethiobiotin (DTB) to biotin by the insertion of a sulfur atom into dethiobiotin via a radical-based mechanism. This Synechococcus sp. (strain CC9902) protein is Biotin synthase.